A 121-amino-acid polypeptide reads, in one-letter code: Large ribosomal subunit protein bL12 (121 aa).

It belongs to the bacterial ribosomal protein bL12 family. In terms of assembly, homodimer. Part of the ribosomal stalk of the 50S ribosomal subunit. Forms a multimeric L10(L12)X complex, where L10 forms an elongated spine to which 2 to 4 L12 dimers bind in a sequential fashion. Binds GTP-bound translation factors.

Functionally, forms part of the ribosomal stalk which helps the ribosome interact with GTP-bound translation factors. Is thus essential for accurate translation. In Leuconostoc mesenteroides subsp. mesenteroides (strain ATCC 8293 / DSM 20343 / BCRC 11652 / CCM 1803 / JCM 6124 / NCDO 523 / NBRC 100496 / NCIMB 8023 / NCTC 12954 / NRRL B-1118 / 37Y), this protein is Large ribosomal subunit protein bL12.